The following is a 272-amino-acid chain: Exosome complex component Rrp42 (272 aa).

It belongs to the RNase PH family. Rrp42 subfamily. As to quaternary structure, component of the archaeal exosome complex. Forms a hexameric ring-like arrangement composed of 3 Rrp41-Rrp42 heterodimers. The hexameric ring associates with a trimer of Rrp4 and/or Csl4 subunits.

Its subcellular location is the cytoplasm. Its function is as follows. Non-catalytic component of the exosome, which is a complex involved in RNA degradation. Contributes to the structuring of the Rrp41 active site. The protein is Exosome complex component Rrp42 of Thermococcus onnurineus (strain NA1).